A 458-amino-acid chain; its full sequence is Serine protease HTRA2, mitochondrial (458 aa).

The N-terminal 31 residues, 1–31 (MAALRAGRGAGWSLRGWRALWGGRWGKGPLL), are a transit peptide targeting the mitochondrion. Residues 32–133 (TPDLRALLTS…GGRGPPAVLA (102 aa)) constitute a propeptide that is removed on maturation. A helical transmembrane segment spans residues 105–125 (VWLAVALGAGGAVLLLFWGGG). An IAP-binding motif motif is present at residues 134-137 (SVLG). The serine protease stretch occupies residues 166–342 (ILGRHPFSGR…IPSDRLREFL (177 aa)). Catalysis depends on charge relay system residues histidine 198, aspartate 228, and serine 306. The PDZ domain occupies 364 to 445 (VMMLTLTPSI…QLAVRIRRGQ (82 aa)).

This sequence belongs to the peptidase S1C family. Homotrimer. Interacts with MXI2. Interacts with THAP5 under apoptotic conditions. The mature protein, but not the precursor, binds to BIRC2/c-IAP1, BIRC3/c-IAP2 and XIAP/BIRC4. Interacts with BIRC6/bruce. Interacts with AREL1 (via HECT domain); in the cytoplasm following induction of apoptosis. Post-translationally, ubiquitinated by BIRC6; this activity is inhibited by DIABLO/SMAC. Autoproteolytically activated.

It is found in the mitochondrion intermembrane space. The protein localises to the mitochondrion membrane. It carries out the reaction Cleavage of non-polar aliphatic amino-acids at the P1 position, with a preference for Val, Ile and Met. At the P2 and P3 positions, Arg is selected most strongly with a secondary preference for other hydrophilic residues.. Inhibited by BIRC6. Serine protease that shows proteolytic activity against a non-specific substrate beta-casein. Promotes apoptosis by either relieving the inhibition of BIRC proteins on caspases, leading to an increase in caspase activity; or by a BIRC inhibition-independent, caspase-independent and serine protease activity-dependent mechanism. Cleaves BIRC6 and relieves its inhibition on CASP3, CASP7 and CASP9, but it is also prone to inhibition by BIRC6. Cleaves THAP5 and promotes its degradation during apoptosis. The sequence is that of Serine protease HTRA2, mitochondrial (HTRA2) from Bos taurus (Bovine).